A 280-amino-acid polypeptide reads, in one-letter code: DegV domain-containing protein M6_Spy1440 (280 aa).

A DegV domain is found at 3-280 (WKIVTDSGCD…DGGLLMGYEI (278 aa)). Hexadecanoate-binding residues include Ser-63 and Ser-91.

Its function is as follows. May bind long-chain fatty acids, such as palmitate, and may play a role in lipid transport or fatty acid metabolism. The sequence is that of DegV domain-containing protein M6_Spy1440 from Streptococcus pyogenes serotype M6 (strain ATCC BAA-946 / MGAS10394).